The primary structure comprises 437 residues: MSMFLDTAKISVQAGRGGDGMVAFRREKYVPNGGPWGGDGGKGGSVIFRVDEGLRTLMDFRYNRKFKAKSGEKGMTKGMHGRGAEDLIVFVPQGTTVRDAETGKVITDLVEHGQEVVIAKGGRGGRGNIRFATPRNPAPEIAENGEPGEERQLELELKILADVGLVGFPSVGKSTLLSVVSSAKPKIGAYHFTTIVPNLGMVRTKSGDSFAMADLPGLIEGASQGVGLGTQFLRHIERTRVILHVIDMSASEGRDPYEDYVSINNELETYNLRLMERPQIIVANKMDMPEAQDNLKAFKKKLATQYDEFNDLPMIFSISSLAHQGLENLLEATAELLAKTDEFLLYDESDLVDEEAYYGFAEAEKEFEITRDDDATWVLSGEKLERLFVMTNMERDESIMKFARQLRGMGVDEALRERGAKDGDLVRIGKFEFEFVD.

An Obg domain is found at 2-160 (SMFLDTAKIS…RQLELELKIL (159 aa)). The region spanning 161 to 338 (ADVGLVGFPS…LLEATAELLA (178 aa)) is the OBG-type G domain. Residues 167 to 174 (GFPSVGKS), 192 to 196 (FTTIV), 214 to 217 (DLPG), 284 to 287 (NKMD), and 319 to 321 (SSL) contribute to the GTP site. Mg(2+)-binding residues include S174 and T194. One can recognise an OCT domain in the interval 359-437 (GFAEAEKEFE…IGKFEFEFVD (79 aa)).

The protein belongs to the TRAFAC class OBG-HflX-like GTPase superfamily. OBG GTPase family. As to quaternary structure, monomer. Requires Mg(2+) as cofactor.

Its subcellular location is the cytoplasm. Its function is as follows. An essential GTPase which binds GTP, GDP and possibly (p)ppGpp with moderate affinity, with high nucleotide exchange rates and a fairly low GTP hydrolysis rate. Plays a role in control of the cell cycle, stress response, ribosome biogenesis and in those bacteria that undergo differentiation, in morphogenesis control. This is GTPase Obg from Streptococcus pyogenes serotype M3 (strain ATCC BAA-595 / MGAS315).